Here is a 320-residue protein sequence, read N- to C-terminus: Phosphatidylserine decarboxylase proenzyme (320 aa).

Residues aspartate 90, histidine 147, and serine 254 each act as charge relay system; for autoendoproteolytic cleavage activity in the active site. Residue serine 254 is the Schiff-base intermediate with substrate; via pyruvic acid; for decarboxylase activity of the active site. Residue serine 254 is modified to Pyruvic acid (Ser); by autocatalysis. A disordered region spans residues 290-320; sequence TAAAEPAPLPEEEIRAEHRASPLVDDKQDQG. Positions 301–320 are enriched in basic and acidic residues; that stretch reads EEIRAEHRASPLVDDKQDQG.

It belongs to the phosphatidylserine decarboxylase family. PSD-B subfamily. Prokaryotic type I sub-subfamily. In terms of assembly, heterodimer of a large membrane-associated beta subunit and a small pyruvoyl-containing alpha subunit. It depends on pyruvate as a cofactor. In terms of processing, is synthesized initially as an inactive proenzyme. Formation of the active enzyme involves a self-maturation process in which the active site pyruvoyl group is generated from an internal serine residue via an autocatalytic post-translational modification. Two non-identical subunits are generated from the proenzyme in this reaction, and the pyruvate is formed at the N-terminus of the alpha chain, which is derived from the carboxyl end of the proenzyme. The autoendoproteolytic cleavage occurs by a canonical serine protease mechanism, in which the side chain hydroxyl group of the serine supplies its oxygen atom to form the C-terminus of the beta chain, while the remainder of the serine residue undergoes an oxidative deamination to produce ammonia and the pyruvoyl prosthetic group on the alpha chain. During this reaction, the Ser that is part of the protease active site of the proenzyme becomes the pyruvoyl prosthetic group, which constitutes an essential element of the active site of the mature decarboxylase.

It is found in the cell membrane. It carries out the reaction a 1,2-diacyl-sn-glycero-3-phospho-L-serine + H(+) = a 1,2-diacyl-sn-glycero-3-phosphoethanolamine + CO2. The protein operates within phospholipid metabolism; phosphatidylethanolamine biosynthesis; phosphatidylethanolamine from CDP-diacylglycerol: step 2/2. Catalyzes the formation of phosphatidylethanolamine (PtdEtn) from phosphatidylserine (PtdSer). The polypeptide is Phosphatidylserine decarboxylase proenzyme (Klebsiella pneumoniae subsp. pneumoniae (strain ATCC 700721 / MGH 78578)).